Here is a 111-residue protein sequence, read N- to C-terminus: MFGKAGLGGLMKQAQQMQENMKKAQAKLAETEIEGEAGNGLVKITMTCAHEVRKIDISPDLIQEAADDKEMLEDLILAALKSARDKAEETANKTMGAFTQGLPPGVGDFFR.

The protein belongs to the YbaB/EbfC family. Homodimer.

The protein resides in the cytoplasm. It localises to the nucleoid. Functionally, binds to DNA and alters its conformation. May be involved in regulation of gene expression, nucleoid organization and DNA protection. The chain is Nucleoid-associated protein NMA1657 from Neisseria meningitidis serogroup A / serotype 4A (strain DSM 15465 / Z2491).